The sequence spans 502 residues: Lysine--tRNA ligase (502 aa).

Mg(2+) contacts are provided by E398 and E405.

Belongs to the class-II aminoacyl-tRNA synthetase family. Homodimer. Requires Mg(2+) as cofactor.

It localises to the cytoplasm. It carries out the reaction tRNA(Lys) + L-lysine + ATP = L-lysyl-tRNA(Lys) + AMP + diphosphate. The polypeptide is Lysine--tRNA ligase (Thermosipho africanus (strain TCF52B)).